Reading from the N-terminus, the 221-residue chain is Protein-L-isoaspartate O-methyltransferase (221 aa).

Ser68 is a catalytic residue.

It belongs to the methyltransferase superfamily. L-isoaspartyl/D-aspartyl protein methyltransferase family.

The protein resides in the cytoplasm. It carries out the reaction [protein]-L-isoaspartate + S-adenosyl-L-methionine = [protein]-L-isoaspartate alpha-methyl ester + S-adenosyl-L-homocysteine. Its function is as follows. Catalyzes the methyl esterification of L-isoaspartyl residues in peptides and proteins that result from spontaneous decomposition of normal L-aspartyl and L-asparaginyl residues. It plays a role in the repair and/or degradation of damaged proteins. The chain is Protein-L-isoaspartate O-methyltransferase from Desulfosudis oleivorans (strain DSM 6200 / JCM 39069 / Hxd3) (Desulfococcus oleovorans).